The following is a 906-amino-acid chain: Envelope glycoprotein B (906 aa).

A signal peptide spans 1–31 (MESRIWCLVVCVNLCIVCLGAAVSSSSTSHA). A compositionally biased stretch (low complexity) spans 29–46 (SHATSSTHNGSHTSRTTS). The interval 29 to 51 (SHATSSTHNGSHTSRTTSAQTRS) is disordered. At 32–750 (TSSTHNGSHT…EGVATFLKNP (719 aa)) the chain is on the virion surface side. N-linked (GlcNAc...) asparagine; by host glycans are attached at residues Asn-37, Asn-68, Asn-73, and Asn-85. Cystine bridges form between Cys-94–Cys-550, Cys-111–Cys-506, Cys-185–Cys-250, Cys-246–Cys-250, and Cys-344–Cys-391. Positions 152-158 (SYAYIYT) are involved in fusion and/or binding to host membrane. N-linked (GlcNAc...) asparagine; by host glycosylation is present at Asn-208. Positions 237–244 (GSTWLYRE) are involved in fusion and/or binding to host membrane. Asn-281, Asn-286, Asn-302, Asn-341, Asn-383, Asn-405, Asn-409, Asn-417, Asn-447, Asn-452, Asn-464, Asn-465, Asn-554, and Asn-585 each carry an N-linked (GlcNAc...) asparagine; by host glycan. A disulfide bridge connects residues Cys-573 and Cys-610. Hydrophobic membrane proximal region regions lie at residues 696–748 (VEDK…TFLK) and 727–747 (VAIG…ATFL). Residues 751 to 771 (FGAFTIILVAIAVVIITYLIY) traverse the membrane as a helical segment. Residues 772–906 (TRQRRLCTQP…LKDSDEEENV (135 aa)) lie on the Intravirion side of the membrane. Composition is skewed to polar residues over residues 797 to 809 (VTSG…SLQA) and 859 to 876 (RAQQ…GTQD). Disordered stretches follow at residues 797–837 (VTSG…TAAP) and 856–906 (AEQR…EENV). Residues 877–886 (KGQKPNLLDR) show a composition bias toward basic and acidic residues. Positions 894–897 (YRHL) match the Internalization motif motif.

This sequence belongs to the herpesviridae glycoprotein B family. As to quaternary structure, homotrimer; disulfide-linked. Binds to heparan sulfate proteoglycans. Interacts with gH/gL heterodimer. Interacts with host TLR1 and TLR2. Interacts with host C-type lectin CD209/DC-SIGN. Interacts with host ITGB1, EGFR, and PDGFRA. A proteolytic cleavage by host furin generates two subunits that remain linked by disulfide bonds.

The protein resides in the virion membrane. It is found in the host cell membrane. It localises to the host endosome membrane. Its subcellular location is the host Golgi apparatus membrane. Its function is as follows. Envelope glycoprotein that plays a role in host cell entry, cell to-cell virus transmission, and fusion of infected cells. May be involved in the initial attachment via binding to heparan sulfate together with the gM/gN complex that binds heparin with higher affinity. Interacts with host integrin ITGB1, PDGFRA and EGFR that likely serve as postattachment entry receptors. Also participates in the fusion of viral and cellular membranes leading to virus entry into the host cell. Membrane fusion is mediated by the fusion machinery composed at least of gB and the heterodimer gH/gL. This is Envelope glycoprotein B from Human cytomegalovirus (strain AD169) (HHV-5).